A 143-amino-acid polypeptide reads, in one-letter code: Large ribosomal subunit protein uL11 (143 aa).

It belongs to the universal ribosomal protein uL11 family. As to quaternary structure, part of the ribosomal stalk of the 50S ribosomal subunit. Interacts with L10 and the large rRNA to form the base of the stalk. L10 forms an elongated spine to which L12 dimers bind in a sequential fashion forming a multimeric L10(L12)X complex. Post-translationally, one or more lysine residues are methylated.

Functionally, forms part of the ribosomal stalk which helps the ribosome interact with GTP-bound translation factors. The chain is Large ribosomal subunit protein uL11 from Leifsonia xyli subsp. xyli (strain CTCB07).